A 257-amino-acid chain; its full sequence is Large ribosomal subunit protein uL2 (257 aa).

The segment at 207–226 (VEHPFGGGNHQHIGKPSTIR) is disordered.

It belongs to the universal ribosomal protein uL2 family. In terms of assembly, component of the large ribosomal subunit.

Its subcellular location is the cytoplasm. Functionally, component of the large ribosomal subunit. The ribosome is a large ribonucleoprotein complex responsible for the synthesis of proteins in the cell. This Ictalurus punctatus (Channel catfish) protein is Large ribosomal subunit protein uL2 (rpl8).